Reading from the N-terminus, the 115-residue chain is MKNKFVELVEKSQLRTDLPEFNPGDSITVNLWIKEGDKQRIQAFKGFVLRKRNRGLHSAFTVRKMSSGVGVERTFQTHSPLIDSIIVEKRADVRRAKLYYMRGLTGKAARIKEKV.

Belongs to the bacterial ribosomal protein bL19 family.

Functionally, this protein is located at the 30S-50S ribosomal subunit interface and may play a role in the structure and function of the aminoacyl-tRNA binding site. The chain is Large ribosomal subunit protein bL19 from Francisella tularensis subsp. tularensis (strain WY96-3418).